The sequence spans 88 residues: Apolipoprotein C-I (88 aa).

The N-terminal stretch at 1–26 is a signal peptide; it reads MRLFIALPVLIVVVAMALEGPAPAQA.

This sequence belongs to the apolipoprotein C1 family.

The protein localises to the secreted. Its function is as follows. Inhibitor of lipoprotein binding to the low density lipoprotein (LDL) receptor, LDL receptor-related protein, and very low density lipoprotein (VLDL) receptor. Associates with high density lipoproteins (HDL) and the triacylglycerol-rich lipoproteins in the plasma and makes up about 10% of the protein of the VLDL and 2% of that of HDL. Appears to interfere directly with fatty acid uptake and is also the major plasma inhibitor of cholesteryl ester transfer protein (CETP). Binds free fatty acids and reduces their intracellular esterification. Modulates the interaction of APOE with beta-migrating VLDL and inhibits binding of beta-VLDL to the LDL receptor-related protein. This is Apolipoprotein C-I (Apoc1) from Rattus norvegicus (Rat).